A 471-amino-acid chain; its full sequence is Plant intracellular Ras-group-related LRR protein 2 (471 aa).

Residues 106 to 133 (VVRLDEVHDSYEKKLKDTEEELSRVYST) adopt a coiled-coil conformation. 10 LRR repeats span residues 159–182 (GGTVERIDLSSQELKLIPEAFWKV), 183–205 (VGLVYLNLSGNDLTFIPDAISKL), 206–229 (KKLEELDVSSNSLESLPDSIGMLL), 231–251 (LRILNVNANNLTALPESIAHC), 253–275 (SLVELDASYNNLTSLPTNIGYGL), 276–298 (QNLERLSIQLNKLRYFPGSISEM), 300–321 (NLKYLDAHMNEIHGIPNSIGRL), 324–346 (LEVLNLSSNFNNLMGVPDTITDL), 347–369 (TNLRELDLSNNQIQAIPDSFYRL), and 371–392 (KLEKLNLDQNPLEIPSQEVATQ). The short motif at 393-405 (GAEVVREFMRKRW) is the GVYW; degenerate element.

It belongs to the SHOC2 family. As to expression, widely expressed but preferentially in roots.

In terms of biological role, leucine-rich repeat protein that likely mediates protein interactions, possibly in the context of signal transduction. The sequence is that of Plant intracellular Ras-group-related LRR protein 2 (PIRL2) from Arabidopsis thaliana (Mouse-ear cress).